The chain runs to 310 residues: GMP synthase [glutamine-hydrolyzing] subunit B (310 aa).

Residues 1–187 (MSFSDYISRI…LGLPTDIQPF (187 aa)) form the GMPS ATP-PPase domain. 27–33 (SGGQDSS) lines the ATP pocket.

Heterodimer composed of a glutamine amidotransferase subunit (A) and a GMP-binding subunit (B).

The enzyme catalyses XMP + L-glutamine + ATP + H2O = GMP + L-glutamate + AMP + diphosphate + 2 H(+). The protein operates within purine metabolism; GMP biosynthesis; GMP from XMP (L-Gln route): step 1/1. Functionally, catalyzes the synthesis of GMP from XMP. The chain is GMP synthase [glutamine-hydrolyzing] subunit B (guaAB) from Thermoplasma volcanium (strain ATCC 51530 / DSM 4299 / JCM 9571 / NBRC 15438 / GSS1).